Consider the following 168-residue polypeptide: Phosphopantetheine adenylyltransferase (168 aa).

Residue Ser-9 coordinates substrate. Residues 9-10 (SF) and His-17 contribute to the ATP site. Positions 41, 73, and 87 each coordinate substrate. ATP-binding positions include 88-90 (GMR), Glu-98, and 123-129 (WIYTSSS).

It belongs to the bacterial CoaD family. As to quaternary structure, homohexamer. Mg(2+) serves as cofactor.

The protein resides in the cytoplasm. The enzyme catalyses (R)-4'-phosphopantetheine + ATP + H(+) = 3'-dephospho-CoA + diphosphate. It functions in the pathway cofactor biosynthesis; coenzyme A biosynthesis; CoA from (R)-pantothenate: step 4/5. Its function is as follows. Reversibly transfers an adenylyl group from ATP to 4'-phosphopantetheine, yielding dephospho-CoA (dPCoA) and pyrophosphate. The chain is Phosphopantetheine adenylyltransferase from Desulfosudis oleivorans (strain DSM 6200 / JCM 39069 / Hxd3) (Desulfococcus oleovorans).